The sequence spans 196 residues: DnaA initiator-associating protein DiaA (196 aa).

The SIS domain maps to 34-196; sequence LVQSLLNGNK…DNTLFPHQDD (163 aa).

Belongs to the SIS family. DiaA subfamily. In terms of assembly, homotetramer; dimer of dimers.

Its function is as follows. Required for the timely initiation of chromosomal replication via direct interactions with the DnaA initiator protein. This is DnaA initiator-associating protein DiaA from Yersinia pseudotuberculosis serotype O:1b (strain IP 31758).